We begin with the raw amino-acid sequence, 93 residues long: Large ribosomal subunit protein uL23cz/uL23cy (93 aa).

This sequence belongs to the universal ribosomal protein uL23 family. In terms of assembly, part of the 50S ribosomal subunit.

It is found in the plastid. It localises to the chloroplast. Its function is as follows. Binds to 23S rRNA. In Piper cenocladum (Ant piper), this protein is Large ribosomal subunit protein uL23cz/uL23cy (rpl23-A).